We begin with the raw amino-acid sequence, 323 residues long: CD-NTase-associated protein 12 (323 aa).

One can recognise a TIR domain in the interval 4 to 120 (RIFIGSSSEQ…LDGITVAKFT (117 aa)). E84 is a catalytic residue. The tract at residues 154 to 323 (STALAIGYYN…YVNVLTNVKL (170 aa)) is STING domain. 3',3'-c-di-GMP-binding residues include S164, F165, R234, P237, D259, S262, and T263.

The protein in the C-terminal section; belongs to the bacterial STING family. As to quaternary structure, forms homodimers which subsequently form filaments. In vitro in the presence of c-di-GMP forms filaments up to 300 nm in length with an ordered array of parallel-stacked subunits, where the TIR domains form one face of the filament and the STING domains form the other face. Antiparallel double-filament structures are also seen. 3'3'-cGAMP weakly induces filament formation, while 2'3'-cGAMP does not.

The enzyme catalyses NAD(+) + H2O = ADP-D-ribose + nicotinamide + H(+). Its activity is regulated as follows. NAD(+) hydrolase activity is strongly stimulated by c-di-GMP, weakly by 3'3'-cGAMP, very weakly by c-di-AMP and not at all by 2'3'-cGAMP. Self-association of TIR domains is required for NADase activity. Functionally, effector protein of a CBASS antiviral system with NAD(+) hydrolase activity. CBASS (cyclic oligonucleotide-based antiphage signaling system) provides immunity against bacteriophage. The CD-NTase protein synthesizes cyclic nucleotides in response to infection; these serve as specific second messenger signals. The signals activate a diverse range of effectors, leading to bacterial cell death and thus abortive phage infection. A type I-D(GG) CBASS system. Upon activation by 3'3'-c-di-GMP forms filaments which hydrolyze NAD(+); filament formation is required for enzyme activation. Induction in an E.coli strain that synthesizes c-di-GMP leads to significant growth inhibition. Binds c-di-GMP and 3'3'-cGAMP (3'3'-cyclic GMP-AMP), but not c-di-AMP, 2'3'-cGAMP or cUMP-AMP. The chain is CD-NTase-associated protein 12 from Sphingobacterium faecium (strain DSM 11690 / JCM 21820 / NBRC 15299 / NCIMB 13408 / KS 0470).